Consider the following 271-residue polypeptide: Interleukin-1 alpha (271 aa).

Positions 1-112 are excised as a propeptide; that stretch reads MAKVPDMFED…DSEEEIIKPR (112 aa). An N6-acetyllysine modification is found at Lys82. The nuclear localization signal (NLS) stretch occupies residues 82–86; sequence KKRRL. Phosphoserine is present on Ser87. 2 N-linked (GlcNAc...) asparagine glycosylation sites follow: Asn102 and Asn141.

This sequence belongs to the IL-1 family. As to quaternary structure, monomer. Interacts with TMED10; the interaction mediates the translocation from the cytoplasm into the ERGIC (endoplasmic reticulum-Golgi intermediate compartment) and thereby secretion. Interacts with IL1R1. Interacts with S100A13; this interaction is the first step in the export of IL1A, followed by direct translocation of this complex across the plasma membrane. In terms of processing, acetylated within its nuclear localization sequence, which impacts subcellular localization. Proteolytic processed by CAPN1 in a calcium-dependent manner. Cleavage from 31 kDa precursor to 18 kDa biologically active molecules. Post-translationally, phosphorylated. Phosphorylation greatly enhances susceptibility to digestion and promotes the conversion of pre-IL1A alpha to the biologically active IL1A.

It localises to the nucleus. Its subcellular location is the cytoplasm. It is found in the secreted. In terms of biological role, cytokine constitutively present intracellularly in nearly all resting non-hematopoietic cells that plays an important role in inflammation and bridges the innate and adaptive immune systems. After binding to its receptor IL1R1 together with its accessory protein IL1RAP, forms the high affinity interleukin-1 receptor complex. Signaling involves the recruitment of adapter molecules such as MYD88, IRAK1 or IRAK4. In turn, mediates the activation of NF-kappa-B and the three MAPK pathways p38, p42/p44 and JNK pathways. Within the cell, acts as an alarmin and cell death results in its liberation in the extracellular space after disruption of the cell membrane to induce inflammation and alert the host to injury or damage. In addition to its role as a danger signal, which occurs when the cytokine is passively released by cell necrosis, directly senses DNA damage and acts as signal for genotoxic stress without loss of cell integrity. The chain is Interleukin-1 alpha (IL1A) from Cercocebus atys (Sooty mangabey).